Reading from the N-terminus, the 211-residue chain is SOSS complex subunit B1 (211 aa).

Positions 22–92 form a DNA-binding region, OB; sequence IVLETGRVTK…TLYTGRGGDL (71 aa). Residues 110–211 form a disordered region; that stretch reads EPNPEYSAQQ…GKETRRSSKR (102 aa). Positions 115–128 are enriched in polar residues; that stretch reads YSAQQAPNKTVQND. Pro residues-rich tracts occupy residues 133–143 and 165–174; these read APQPPTGPPAT and PHPPHTPSHP.

It belongs to the SOSS-B family. SOSS-B1 subfamily. In terms of assembly, component of the SOSS complex, composed of SOSS-B (SOSS-B1/NABP2 or SOSS-B2/NABP1), SOSS-A/INTS3 and SOSS-C/INIP. SOSS complexes containing SOSS-B1/NABP2 are more abundant than complexes containing SOSS-B2/NABP1. Directly interacts with ATM, SOSS-A/INTS3 and RAD51. Interacts with INTS7. Post-translationally, phosphorylated by ATM in response to DNA damage. Phosphorylation prevents degradation by the proteasome, hence stabilization of the protein and accumulation within cells. In terms of processing, ubiquitinated in a FBXL5-dependent manner, leading to proteasomal degradation.

It localises to the nucleus. In terms of biological role, component of the SOSS complex, a multiprotein complex that functions downstream of the MRN complex to promote DNA repair and G2/M checkpoint. In the SOSS complex, acts as a sensor of single-stranded DNA that binds to single-stranded DNA, in particular to polypyrimidines. The SOSS complex associates with DNA lesions and influences diverse endpoints in the cellular DNA damage response including cell-cycle checkpoint activation, recombinational repair and maintenance of genomic stability. Required for efficient homologous recombination-dependent repair of double-strand breaks (DSBs) and ATM-dependent signaling pathways. This Bos taurus (Bovine) protein is SOSS complex subunit B1 (NABP2).